A 333-amino-acid chain; its full sequence is uncharacterized protein (333 aa).

Positions 1 to 23 (MSRSFMIILTIMLIALSLGEVLA) are cleaved as a signal peptide. The chain crosses the membrane as a helical span at residues 232–252 (SFFLGVLVTLMILSPVIVYLW).

The protein localises to the membrane. This is an uncharacterized protein from Pyrococcus abyssi (strain GE5 / Orsay).